The primary structure comprises 955 residues: E3 ubiquitin-protein ligase MIB2 (955 aa).

Met-1 is modified (N-acetylmethionine). Residues Met-1–Ala-80 enclose the MIB/HERC2 1 domain. Residues His-86 to Ser-138 form a ZZ-type zinc finger. Cys-91, Cys-94, Cys-106, Cys-109, Cys-115, Cys-118, His-124, and His-128 together coordinate Zn(2+). One can recognise an MIB/HERC2 2 domain in the interval Leu-149–Ala-227. Ser-251 is modified (phosphoserine). 9 ANK repeats span residues Gln-464–Leu-493, Glu-497–Ala-526, Thr-530–Leu-559, His-563–Ala-595, Gln-599–Asp-628, Asp-633–Val-663, Lys-667–Ala-696, Glu-700–Pro-728, and Arg-769–Ala-798. 2 consecutive RING-type zinc fingers follow at residues Cys-832 to Gln-867 and Cys-911 to Arg-944.

Interacts with actin monomer. In terms of processing, ubiquitinated. Possibly via autoubiquitination. In terms of tissue distribution, expressed in skeletal muscle, and to a lesser extent in heart, brain and kidney.

The protein resides in the cytoplasm. It is found in the endosome. It catalyses the reaction S-ubiquitinyl-[E2 ubiquitin-conjugating enzyme]-L-cysteine + [acceptor protein]-L-lysine = [E2 ubiquitin-conjugating enzyme]-L-cysteine + N(6)-ubiquitinyl-[acceptor protein]-L-lysine.. The protein operates within protein modification; protein ubiquitination. In terms of biological role, E3 ubiquitin-protein ligase that mediates ubiquitination of Delta receptors, which act as ligands of Notch proteins. Positively regulates the Delta-mediated Notch signaling by ubiquitinating the intracellular domain of Delta, leading to endocytosis of Delta receptors. The chain is E3 ubiquitin-protein ligase MIB2 from Homo sapiens (Human).